Consider the following 258-residue polypeptide: Acyl-[acyl-carrier-protein]--UDP-N-acetylglucosamine O-acyltransferase (258 aa).

The protein belongs to the transferase hexapeptide repeat family. LpxA subfamily. Homotrimer.

It localises to the cytoplasm. It catalyses the reaction a (3R)-hydroxyacyl-[ACP] + UDP-N-acetyl-alpha-D-glucosamine = a UDP-3-O-[(3R)-3-hydroxyacyl]-N-acetyl-alpha-D-glucosamine + holo-[ACP]. It participates in glycolipid biosynthesis; lipid IV(A) biosynthesis; lipid IV(A) from (3R)-3-hydroxytetradecanoyl-[acyl-carrier-protein] and UDP-N-acetyl-alpha-D-glucosamine: step 1/6. In terms of biological role, involved in the biosynthesis of lipid A, a phosphorylated glycolipid that anchors the lipopolysaccharide to the outer membrane of the cell. This Neisseria gonorrhoeae (strain ATCC 700825 / FA 1090) protein is Acyl-[acyl-carrier-protein]--UDP-N-acetylglucosamine O-acyltransferase.